A 121-amino-acid polypeptide reads, in one-letter code: RING-box protein HRT1 (121 aa).

The tract at residues Met-1–Lys-31 is disordered. Ser-15 is modified (phosphoserine). The segment covering Gln-16–Ala-26 has biased composition (low complexity). Zn(2+) contacts are provided by Cys-55, Cys-58, Cys-66, Cys-69, Cys-81, Cys-88, His-90, His-93, His-95, Cys-107, and Asp-110. An RING-type zinc finger spans residues Cys-55–Asn-111.

The protein belongs to the RING-box family. In terms of assembly, component of multiple cullin-RING ligases (CRLs) composed of 4 subunits: the RING protein HRT1, a cullin, a linker protein, and one of many alternative substrate receptors. Component of SCF E3 ubiquitin ligase complexes containing the cullin CDC53, the linker protein SKP1/CBF3D, and substrate receptors containing F-box motifs like DAS1 or GRR1. Component of RTT101(MMS1) E3 ubiquitin ligase complexes containing the cullin RTT101, the linker protein MMS1, and substrate receptors belonging to a protein family described as DCAF (DDB1- and CUL4-associated factor) like MMS22. Component of CRL3 E3 ubiquitin ligase complexes containing the cullin CUL3, the linker protein ELC1, and substrate receptors containing SOCS-box motifs like ELA1. Interacts with CDC53, CUL3, RTT101, CDC4 and CDC34/UBC3.

It is found in the cytoplasm. Its subcellular location is the nucleus. It functions in the pathway protein modification; protein ubiquitination. Its function is as follows. Core component of multiple cullin-RING-based E3 ubiquitin-protein ligase complexes (CRLs), which mediate the ubiquitination of target proteins. Recruits the E2 ubiquitin-conjugating enzyme CDC34/UBC3 to the complex and brings it into close proximity to the substrate. Also stimulates CDC34/UBC3 autoubiquitination and promotes the neddylation of CDC53 and RTT101. Component of the SCF(CDC4) ubiquitin ligase required for ubiquitination of the cyclin-dependent kinase inhibitor SIC1 and for the G1-to-S phase transition. Component of the RTT101(MMS1-MMS22) ubiquitin ligase that promotes fork progression through damaged DNA or natural pause sites. Component of the CRL3(ELA1) ubiquitin ligase required for ubiquitination of RPB1, the largest subunit of RNA polymerase II (Pol II), which targets Pol II for proteasomal degradation in DNA-damaged cells. The sequence is that of RING-box protein HRT1 (HRT1) from Saccharomyces cerevisiae (strain ATCC 204508 / S288c) (Baker's yeast).